Here is a 25-residue protein sequence, read N- to C-terminus: Chrysophsin-1 (25 aa).

A Histidine amide modification is found at His-25.

In terms of tissue distribution, gill. Localized in certain epithelial cells lining the surface of secondary lamellae and eosinophilic granule cell-like cells at the base of secondary lamellae.

The protein localises to the secreted. In terms of biological role, has antibacterial activity against Gram-positive bacteria B.subtilis ATCC 6633, L.garvieae ATCC 49156 and S.iniae F-8502, and Gram-negative bacteria E.coli WT-2, V.anguillarum ATCC 19264, V.penaeicida KHA, V.harveyi ATCC 14126, V.vulnificus ATCC 33148, A.salmonicida NCMB 1102 and P.putida ATCC 12633. Has hemolytic activity against human red blood cells. Seems to disrupt the membranes by adopting an alpha helical conformation. May play a significant role in innate host defense. This chain is Chrysophsin-1, found in Pagrus major (Red sea bream).